The sequence spans 315 residues: Olfactory receptor 52R1 (315 aa).

Over 1 to 28 the chain is Extracellular; the sequence is MVLASGNSSSHPVSFILLGIPGLESFQL. Asn7 is a glycosylation site (N-linked (GlcNAc...) asparagine). Residues 29–49 form a helical membrane-spanning segment; the sequence is WIAFPFCATYAVAVVGNITLL. The Cytoplasmic portion of the chain corresponds to 50–57; it reads HVIRIDHT. The chain crosses the membrane as a helical span at residues 58 to 78; sequence LHEPMYLFLAMLAITDLVLSS. Residues 79–102 are Extracellular-facing; that stretch reads STQPKMLAIFWFHAHEIQYHACLI. The cysteines at positions 100 and 192 are disulfide-linked. A helical membrane pass occupies residues 103 to 123; the sequence is QVFFIHAFSSVESGVLMAMAL. Topologically, residues 124 to 142 are cytoplasmic; sequence DCYVAICFPLRHSSILTPS. Residues 143–163 form a helical membrane-spanning segment; it reads VVIKLGTIVMLRGLLWVSPFC. Residues 164 to 199 are Extracellular-facing; the sequence is FMVSRMPFCQHQAIPQSYCEHMAVLKLVCADTSISR. The helical transmembrane segment at 200–220 threads the bilayer; that stretch reads GNGLFVAFSVAGFDMIVIGMS. Topologically, residues 221-240 are cytoplasmic; it reads YVMILRAVLQLPSGEARLKA. The helical transmembrane segment at 241-261 threads the bilayer; it reads FSTRSSHICVILALYIPALFS. Over 262–276 the chain is Extracellular; the sequence is FLTYRFGHDVPRVVH. The helical transmembrane segment at 277–297 threads the bilayer; it reads ILFANLYLLIPPMLNPIIYGV. At 298-315 the chain is on the cytoplasmic side; that stretch reads RTKQIGDRVIQGCCGNIP.

It belongs to the G-protein coupled receptor 1 family.

Its subcellular location is the cell membrane. Odorant receptor. The sequence is that of Olfactory receptor 52R1 (OR52R1) from Homo sapiens (Human).